A 208-amino-acid polypeptide reads, in one-letter code: Large ribosomal subunit protein uL3 (208 aa).

Q149 carries the post-translational modification N5-methylglutamine.

The protein belongs to the universal ribosomal protein uL3 family. As to quaternary structure, part of the 50S ribosomal subunit. Forms a cluster with proteins L14 and L19. Methylated by PrmB.

Functionally, one of the primary rRNA binding proteins, it binds directly near the 3'-end of the 23S rRNA, where it nucleates assembly of the 50S subunit. This Glaesserella parasuis serovar 5 (strain SH0165) (Haemophilus parasuis) protein is Large ribosomal subunit protein uL3.